Here is a 346-residue protein sequence, read N- to C-terminus: Holliday junction branch migration complex subunit RuvB (346 aa).

Positions 1 to 182 (MSEPARLISP…FGIPVRLSFY (182 aa)) are large ATPase domain (RuvB-L). ATP-binding positions include leucine 21, arginine 22, glycine 63, lysine 66, threonine 67, threonine 68, 129–131 (EDF), arginine 172, tyrosine 182, and arginine 219. Residue threonine 67 coordinates Mg(2+). Positions 183-253 (TVEELELIVR…IADEALTRLL (71 aa)) are small ATPAse domain (RuvB-S). The segment at 256–346 (NVGFDQLDKR…AQFRLFQEDD (91 aa)) is head domain (RuvB-H). DNA is bound by residues arginine 292, arginine 311, and arginine 316.

The protein belongs to the RuvB family. Homohexamer. Forms an RuvA(8)-RuvB(12)-Holliday junction (HJ) complex. HJ DNA is sandwiched between 2 RuvA tetramers; dsDNA enters through RuvA and exits via RuvB. An RuvB hexamer assembles on each DNA strand where it exits the tetramer. Each RuvB hexamer is contacted by two RuvA subunits (via domain III) on 2 adjacent RuvB subunits; this complex drives branch migration. In the full resolvosome a probable DNA-RuvA(4)-RuvB(12)-RuvC(2) complex forms which resolves the HJ.

The protein resides in the cytoplasm. It carries out the reaction ATP + H2O = ADP + phosphate + H(+). In terms of biological role, the RuvA-RuvB-RuvC complex processes Holliday junction (HJ) DNA during genetic recombination and DNA repair, while the RuvA-RuvB complex plays an important role in the rescue of blocked DNA replication forks via replication fork reversal (RFR). RuvA specifically binds to HJ cruciform DNA, conferring on it an open structure. The RuvB hexamer acts as an ATP-dependent pump, pulling dsDNA into and through the RuvAB complex. RuvB forms 2 homohexamers on either side of HJ DNA bound by 1 or 2 RuvA tetramers; 4 subunits per hexamer contact DNA at a time. Coordinated motions by a converter formed by DNA-disengaged RuvB subunits stimulates ATP hydrolysis and nucleotide exchange. Immobilization of the converter enables RuvB to convert the ATP-contained energy into a lever motion, pulling 2 nucleotides of DNA out of the RuvA tetramer per ATP hydrolyzed, thus driving DNA branch migration. The RuvB motors rotate together with the DNA substrate, which together with the progressing nucleotide cycle form the mechanistic basis for DNA recombination by continuous HJ branch migration. Branch migration allows RuvC to scan DNA until it finds its consensus sequence, where it cleaves and resolves cruciform DNA. This Rhizobium etli (strain CIAT 652) protein is Holliday junction branch migration complex subunit RuvB.